Consider the following 207-residue polypeptide: Ribosomal RNA small subunit methyltransferase G (207 aa).

S-adenosyl-L-methionine-binding positions include Gly-74, Leu-79, 125–126 (VE), and Arg-140.

Belongs to the methyltransferase superfamily. RNA methyltransferase RsmG family.

The protein localises to the cytoplasm. It catalyses the reaction guanosine(527) in 16S rRNA + S-adenosyl-L-methionine = N(7)-methylguanosine(527) in 16S rRNA + S-adenosyl-L-homocysteine. Specifically methylates the N7 position of guanine in position 527 of 16S rRNA. The sequence is that of Ribosomal RNA small subunit methyltransferase G from Shewanella halifaxensis (strain HAW-EB4).